The primary structure comprises 230 residues: Ribonuclease 3 (230 aa).

Residues 5–125 (YSRFYNILGY…VIGAIYLDSD (121 aa)) form the RNase III domain. Residue E40 coordinates Mg(2+). D44 is a catalytic residue. 2 residues coordinate Mg(2+): D111 and E114. E114 is an active-site residue. One can recognise a DRBM domain in the interval 153-223 (DSKSKLQEIL…AEKMIEMLSQ (71 aa)).

The protein belongs to the ribonuclease III family. Homodimer. Requires Mg(2+) as cofactor.

The protein localises to the cytoplasm. It carries out the reaction Endonucleolytic cleavage to 5'-phosphomonoester.. Its function is as follows. Digests double-stranded RNA. Involved in the processing of primary rRNA transcript to yield the immediate precursors to the large and small rRNAs (23S and 16S). Processes some mRNAs, and tRNAs when they are encoded in the rRNA operon. Processes pre-crRNA and tracrRNA of type II CRISPR loci if present in the organism. In Francisella tularensis subsp. tularensis (strain WY96-3418), this protein is Ribonuclease 3.